A 224-amino-acid chain; its full sequence is Respiratory supercomplex factor 2, mitochondrial (224 aa).

Residues 1–13 (MKILTQDEIEAHR) are Mitochondrial intermembrane-facing. A helical membrane pass occupies residues 14–38 (SHTLKGGIEGALAGFAISAIIFKVL). Over 39-47 (PRRYPKFKP) the chain is Mitochondrial matrix. The helical transmembrane segment at 48–75 (STLTWSIKTALWITPPTVLTAICAEEAS) threads the bilayer. At 76 to 103 (NNFDATMYGSGSSSEDALDEHRRWKSLS) the chain is on the mitochondrial intermembrane side. Residues 89–180 (SEDALDEHRR…YENKLHPNKQ (92 aa)) form the HIG1 domain. The chain crosses the membrane as a helical span at residues 104 to 133 (TKDKFVEGLSNNKYKIITGAWAASLYGSWV). Topologically, residues 134–142 (IVNKDPIMT) are mitochondrial matrix. Residues 143–173 (KAQKIVQARMYAQFITVGLLLASVGLSMYEN) traverse the membrane as a helical segment. Topologically, residues 174-184 (KLHPNKQKVNE) are mitochondrial intermembrane. A helical membrane pass occupies residues 185-204 (MRRWENALRVAEEEERLEKE). The Mitochondrial matrix segment spans residues 205–224 (GRRTGYVSNEERINSKIFKS).

As to quaternary structure, associates with a subpopulation of the cytochrome bc1-cytochrome c oxidase supercomplexes. Associates in substoichiometric amounts with complex IV. Interacts with COX3.

The protein resides in the mitochondrion membrane. In terms of biological role, assembly factor that plays a role in the assembly of the respiratory chain supercomplexes (SCs) composed of ubiquinol-cytochrome c oxidoreductase (cytochrome b-c1 complex, complex III, CIII) and cytochrome c oxidase (complex IV, CIV). May be required for late-stage assembly of the COX12 and COX13 subunits. Required for the generation and maintenance of a normal proton motive force (PMF) across the inner mitochondrial membrane (IMM) by preventing proton leakage through an inactive population of CIV that accumulates when RCF1 and/or RCF2 proteins are absent. This Saccharomyces cerevisiae (strain ATCC 204508 / S288c) (Baker's yeast) protein is Respiratory supercomplex factor 2, mitochondrial (RCF2).